The chain runs to 582 residues: Trans-ocimene synthase, chloroplastic (582 aa).

A chloroplast-targeting transit peptide spans 1-35 (MSLIIQSLPHWSRIPPRPPQLSQFQNSSRPKPLIQ). Positions 296, 333, 337, 474, and 477 each coordinate (2E)-geranyl diphosphate. The Mg(2+) site is built by Asp333 and Asp337. A DDXXD motif motif is present at residues 333 to 337 (DDIYD). 3 residues coordinate Mg(2+): Asp477, Thr481, and Glu485.

It belongs to the terpene synthase family. Tpsb subfamily. Monomer. It depends on Mg(2+) as a cofactor. Mn(2+) serves as cofactor. As to expression, expressed in male and female leaves. Barely detectable in fruits and shoots.

The protein localises to the plastid. The protein resides in the chloroplast. The enzyme catalyses (2E)-geranyl diphosphate = (E)-beta-ocimene + diphosphate. It functions in the pathway secondary metabolite biosynthesis; terpenoid biosynthesis. Monoterpene synthase (TPS) involved in the biosynthesis of monoterpene natural products used by traditional Chinese medicine to treat headache, inflammation and intoxication. Catalyzes the conversion of (2E)-geranyl diphosphate (GPP) into (E)-beta-ocimene. This chain is Trans-ocimene synthase, chloroplastic, found in Litsea cubeba (Aromatic litsea).